Here is a 307-residue protein sequence, read N- to C-terminus: Quinolinate synthase (307 aa).

His23 and Ser40 together coordinate iminosuccinate. Position 86 (Cys86) interacts with [4Fe-4S] cluster. Residues Tyr112 to Asn114 and Ser129 contribute to the iminosuccinate site. Cys173 is a binding site for [4Fe-4S] cluster. Residues His199–Glu201 and Thr216 each bind iminosuccinate. Cys265 is a binding site for [4Fe-4S] cluster.

Belongs to the quinolinate synthase family. Type 2 subfamily. Requires [4Fe-4S] cluster as cofactor.

It localises to the cytoplasm. The catalysed reaction is iminosuccinate + dihydroxyacetone phosphate = quinolinate + phosphate + 2 H2O + H(+). It functions in the pathway cofactor biosynthesis; NAD(+) biosynthesis; quinolinate from iminoaspartate: step 1/1. Functionally, catalyzes the condensation of iminoaspartate with dihydroxyacetone phosphate to form quinolinate. This chain is Quinolinate synthase, found in Methanocaldococcus jannaschii (strain ATCC 43067 / DSM 2661 / JAL-1 / JCM 10045 / NBRC 100440) (Methanococcus jannaschii).